Consider the following 99-residue polypeptide: DNA-directed RNA polymerase subunit omega (99 aa).

It belongs to the RNA polymerase subunit omega family. As to quaternary structure, the RNAP catalytic core consists of 2 alpha, 1 beta, 1 beta' and 1 omega subunit. When a sigma factor is associated with the core the holoenzyme is formed, which can initiate transcription.

It catalyses the reaction RNA(n) + a ribonucleoside 5'-triphosphate = RNA(n+1) + diphosphate. In terms of biological role, promotes RNA polymerase assembly. Latches the N- and C-terminal regions of the beta' subunit thereby facilitating its interaction with the beta and alpha subunits. The protein is DNA-directed RNA polymerase subunit omega (rpoZ) of Xylella fastidiosa (strain 9a5c).